Reading from the N-terminus, the 95-residue chain is UPF0473 protein BPUM_2377 (95 aa).

The protein belongs to the UPF0473 family.

The chain is UPF0473 protein BPUM_2377 from Bacillus pumilus (strain SAFR-032).